Here is a 1187-residue protein sequence, read N- to C-terminus: Protein WWC2 (1187 aa).

2 WW domains span residues 10–43 (LPLP…DPRD) and 57–90 (DELP…DPRK). Coiled coils occupy residues 121–194 (KEQR…YKQQ) and 224–256 (ELKS…FHLD). A Phosphoserine modification is found at Ser286. Residues 302-423 (LAEKVRLSLQ…EETTKLTTSL (122 aa)) adopt a coiled-coil conformation. Residues 438-464 (SSGSSLGSLASSRGSLNTSSRGSLNSL) are disordered. The 124-residue stretch at 697 to 820 (ETAQVQIGLR…FSNEIFMLWY (124 aa)) folds into the C2 domain. Disordered stretches follow at residues 830–849 (CKKN…QPML) and 874–963 (ELAQ…ETNT). Positions 859–885 (ALLARTSAELLAVEQELAQEEEEEELR) form a coiled coil. Acidic residues predominate over residues 875–884 (LAQEEEEEEL). A Phosphothreonine modification is found at Thr999. Ser1017 is modified (phosphoserine). Positions 1026–1045 (SLFVRNSTERRSLRVKRAVC) are interaction with PRKCZ. Residues 1063–1143 (DLELDLQASL…DLNAERLMRQ (81 aa)) adopt a coiled-coil conformation.

It belongs to the WWC family. In terms of assembly, forms homodimers and heterodimers with WWC1 and WWC3. Interacts with DLC1 and PRKCZ. Interacts (via WW domains) with LATS1 and LATS2.

It localises to the cytoplasm. The protein resides in the cytosol. Functionally, regulator of the Hippo signaling pathway, also known as the Salvador-Warts-Hippo (SWH) pathway. Enhances phosphorylation of LATS1 and YAP1 and negatively regulates cell proliferation and organ growth due to a suppression of the transcriptional activity of YAP1, the major effector of the Hippo pathway. The protein is Protein WWC2 (Wwc2) of Mus musculus (Mouse).